The following is a 227-amino-acid chain: Enolase-phosphatase E1 (227 aa).

Belongs to the HAD-like hydrolase superfamily. MasA/MtnC family. As to quaternary structure, monomer. Mg(2+) serves as cofactor.

It catalyses the reaction 5-methylsulfanyl-2,3-dioxopentyl phosphate + H2O = 1,2-dihydroxy-5-(methylsulfanyl)pent-1-en-3-one + phosphate. The protein operates within amino-acid biosynthesis; L-methionine biosynthesis via salvage pathway; L-methionine from S-methyl-5-thio-alpha-D-ribose 1-phosphate: step 3/6. Its pathway is amino-acid biosynthesis; L-methionine biosynthesis via salvage pathway; L-methionine from S-methyl-5-thio-alpha-D-ribose 1-phosphate: step 4/6. In terms of biological role, bifunctional enzyme that catalyzes the enolization of 2,3-diketo-5-methylthiopentyl-1-phosphate (DK-MTP-1-P) into the intermediate 2-hydroxy-3-keto-5-methylthiopentenyl-1-phosphate (HK-MTPenyl-1-P), which is then dephosphorylated to form the acireductone 1,2-dihydroxy-3-keto-5-methylthiopentene (DHK-MTPene). The polypeptide is Enolase-phosphatase E1 (Persephonella marina (strain DSM 14350 / EX-H1)).